The sequence spans 168 residues: 3-hydroxyacyl-[acyl-carrier-protein] dehydratase FabZ (168 aa).

The active site involves His54.

Belongs to the thioester dehydratase family. FabZ subfamily.

It is found in the cytoplasm. It carries out the reaction a (3R)-hydroxyacyl-[ACP] = a (2E)-enoyl-[ACP] + H2O. Its function is as follows. Involved in unsaturated fatty acids biosynthesis. Catalyzes the dehydration of short chain beta-hydroxyacyl-ACPs and long chain saturated and unsaturated beta-hydroxyacyl-ACPs. This is 3-hydroxyacyl-[acyl-carrier-protein] dehydratase FabZ from Yersinia enterocolitica serotype O:8 / biotype 1B (strain NCTC 13174 / 8081).